The primary structure comprises 1849 residues: UPF0606 protein KIAA1549L (1849 aa).

Residues 1 to 10 (MDHTASQNAQ) show a composition bias toward polar residues. Disordered regions lie at residues 1–70 (MDHT…LLQL), 142–166 (ATAN…PALS), 213–242 (PTEN…PATR), and 529–586 (RHSV…ERNA). 2 stretches are compositionally biased toward polar residues: residues 529 to 541 (RHSV…QLPN) and 552 to 586 (PGPT…ERNA). Residues 958–986 (KFAQTMEQRLQKAFQDAERKVLNTKSNLT) are a coiled coil. Residues 1180-1200 (LWIIAAVLAPIAVVTVIIIII) traverse the membrane as a helical segment. Disordered stretches follow at residues 1258 to 1338 (LPIR…EEEG), 1460 to 1546 (SKNR…SQPS), 1656 to 1679 (RSTS…AQLH), and 1769 to 1819 (SRYP…APLT). 3 stretches are compositionally biased toward polar residues: residues 1290-1319 (PSEN…AQQK), 1463-1482 (RQQM…SPSP), and 1537-1546 (ETSTLSSQPS). Low complexity-rich tracts occupy residues 1769-1786 (SRYP…YSQP) and 1795-1809 (QAPA…QSLA).

Belongs to the UPF0606 family.

It localises to the membrane. The chain is UPF0606 protein KIAA1549L (KIAA1549L) from Homo sapiens (Human).